The chain runs to 470 residues: Tryptophan synthase beta chain 1, chloroplastic (470 aa).

Positions 1 to 10 (MAASGTSATF) are enriched in polar residues. The interval 1–24 (MAASGTSATFRASVSSAPSSSSQL) is disordered. Residues 12–22 (ASVSSAPSSSS) are compositionally biased toward low complexity. Lys-165 carries the N6-(pyridoxal phosphate)lysine modification.

It belongs to the TrpB family. In terms of assembly, tetramer of two alpha and two beta chains. Pyridoxal 5'-phosphate serves as cofactor.

The protein localises to the plastid. It is found in the chloroplast. It catalyses the reaction (1S,2R)-1-C-(indol-3-yl)glycerol 3-phosphate + L-serine = D-glyceraldehyde 3-phosphate + L-tryptophan + H2O. Its pathway is amino-acid biosynthesis; L-tryptophan biosynthesis; L-tryptophan from chorismate: step 5/5. In terms of biological role, the beta subunit is responsible for the synthesis of L-tryptophan from indole and L-serine. This is Tryptophan synthase beta chain 1, chloroplastic (TSB1) from Arabidopsis thaliana (Mouse-ear cress).